The chain runs to 220 residues: Deoxyribose-phosphate aldolase (220 aa).

Asp89 serves as the catalytic Proton donor/acceptor. The active-site Schiff-base intermediate with acetaldehyde is the Lys151. The active-site Proton donor/acceptor is Lys180.

This sequence belongs to the DeoC/FbaB aldolase family. DeoC type 1 subfamily.

The protein localises to the cytoplasm. It carries out the reaction 2-deoxy-D-ribose 5-phosphate = D-glyceraldehyde 3-phosphate + acetaldehyde. Its pathway is carbohydrate degradation; 2-deoxy-D-ribose 1-phosphate degradation; D-glyceraldehyde 3-phosphate and acetaldehyde from 2-deoxy-alpha-D-ribose 1-phosphate: step 2/2. Catalyzes a reversible aldol reaction between acetaldehyde and D-glyceraldehyde 3-phosphate to generate 2-deoxy-D-ribose 5-phosphate. The chain is Deoxyribose-phosphate aldolase from Streptococcus pneumoniae serotype 2 (strain D39 / NCTC 7466).